The chain runs to 522 residues: GMP synthase [glutamine-hydrolyzing] (522 aa).

Residues 9–204 enclose the Glutamine amidotransferase type-1 domain; it reads KILILDFGAQ…VVDICGCQTL (196 aa). Residue C86 is the Nucleophile of the active site. Residues H178 and E180 contribute to the active site. Residues 205 to 397 form the GMPS ATP-PPase domain; sequence WTAANIIEDQ…LGLPHAMVYR (193 aa). Residue 232-238 coordinates ATP; it reads SGGVDSS.

Homodimer.

It carries out the reaction XMP + L-glutamine + ATP + H2O = GMP + L-glutamate + AMP + diphosphate + 2 H(+). Its pathway is purine metabolism; GMP biosynthesis; GMP from XMP (L-Gln route): step 1/1. In terms of biological role, catalyzes the synthesis of GMP from XMP. The chain is GMP synthase [glutamine-hydrolyzing] from Xylella fastidiosa (strain M12).